Here is a 565-residue protein sequence, read N- to C-terminus: Deformed epidermal autoregulatory factor 1 homolog (565 aa).

Disordered stretches follow at residues 29–62 (AAAAAESEAEEPVLSRDEDSEEDADSEAERETRR) and 162–189 (GLKGPAAPLTPGPQSPPTPLAPGQEKGG). Positions 169–181 (PLTPGPQSPPTPL) are enriched in pro residues. A Phosphothreonine modification is found at Thr171. Residue Ser176 is modified to Phosphoserine. The residue at position 179 (Thr179) is a Phosphothreonine. Positions 193 to 273 (NWDPSVYDSE…QCLIQDGILN (81 aa)) constitute an SAND domain. The Nuclear localization signal motif lies at 301–316 (KRRKKENELPTTPVKK). The interaction with LMO4 stretch occupies residues 403–478 (IAPFPEAALP…QLKTLFEQAK (76 aa)). Phosphothreonine is present on Thr432. A phosphoserine mark is found at Ser443 and Ser448. Positions 504, 507, 515, 518, 524, 528, 536, and 540 each coordinate Zn(2+). The segment at 504 to 540 (CVNCGREAMSECTGCHKVNYCSTFCQRKDWKDHQHVC) adopts an MYND-type zinc-finger fold.

In terms of assembly, homodimer. Interacts with LMO4; LMO4 blocks export from nucleus. Interacts with LMO2 and CLIM2. May interact with the corepressors NCOR1 and NCRO2. Identified in a complex with XRCC5 and XRCC6. Interacts (via the SAND domain) with the DNA-PK complex subunit XRCC6; the interaction is direct and may be inhibited by DNA-binding. May be phosphorylated by DNA-PK complex in a DNA independent manner (in vitro). Ubiquitous. Detected in brain, spleen, adrenal, lung, skeletal muscle, liver, kidney, and in developing germ cells in testis. In pituitary, restricted to hormone-secreting cell types.

It localises to the nucleus. The protein localises to the secreted. Functionally, transcription factor that binds to sequence with multiple copies of 5'-TTC[CG]G-3' present in its own promoter and that of the HNRPA2B1 gene. Down-regulates transcription of these genes. Binds to the retinoic acid response element (RARE) 5'-AGGGTTCACCGAAAGTTCA-3'. Activates the proenkephalin gene independently of promoter binding, probably through protein-protein interaction. When secreted, behaves as an inhibitor of cell proliferation, by arresting cells in the G0 or G1 phase. Regulates epithelial cell proliferation and side-branching in the mammary gland. Required for neural tube closure and skeletal patterning. Controls the expression of peripheral tissue antigens in pancreatic lymph nodes. Transcriptional activator of EIF4G3. May also involved in behavior. This is Deformed epidermal autoregulatory factor 1 homolog (Deaf1) from Rattus norvegicus (Rat).